The chain runs to 191 residues: Small ribosomal subunit protein uS7 (191 aa).

Residues 56 to 80 (NKSGEQGDGDGEGGGKAGGIKKRSL) form a disordered region.

Belongs to the universal ribosomal protein uS7 family. Part of the 30S ribosomal subunit. Contacts proteins S9 and S11.

Functionally, one of the primary rRNA binding proteins, it binds directly to 16S rRNA where it nucleates assembly of the head domain of the 30S subunit. Is located at the subunit interface close to the decoding center, probably blocks exit of the E-site tRNA. In Coxiella burnetii (strain CbuG_Q212) (Coxiella burnetii (strain Q212)), this protein is Small ribosomal subunit protein uS7.